A 484-amino-acid chain; its full sequence is Chromosomal replication initiator protein DnaA (484 aa).

The interval 1-73 (MQEGKNIWSL…EILTEKGHNT (73 aa)) is domain I, interacts with DnaA modulators. The segment at 73–140 (TINVEFINPP…EDIHTKYRNP (68 aa)) is domain II. A domain III, AAA+ region region spans residues 141 to 357 (FLKKKYTFEN…AAVTKLKAHI (217 aa)). Positions 185, 187, 188, and 189 each coordinate ATP. The segment at 358–484 (DLEDIEIDTS…IELMNKINKN (127 aa)) is domain IV, binds dsDNA.

This sequence belongs to the DnaA family. Oligomerizes as a right-handed, spiral filament on DNA at oriC.

It localises to the cytoplasm. Functionally, plays an essential role in the initiation and regulation of chromosomal replication. ATP-DnaA binds to the origin of replication (oriC) to initiate formation of the DNA replication initiation complex once per cell cycle. Binds the DnaA box (a 9 base pair repeat at the origin) and separates the double-stranded (ds)DNA. Forms a right-handed helical filament on oriC DNA; dsDNA binds to the exterior of the filament while single-stranded (ss)DNA is stabiized in the filament's interior. The ATP-DnaA-oriC complex binds and stabilizes one strand of the AT-rich DNA unwinding element (DUE), permitting loading of DNA polymerase. After initiation quickly degrades to an ADP-DnaA complex that is not apt for DNA replication. Binds acidic phospholipids. The polypeptide is Chromosomal replication initiator protein DnaA (Borrelia turicatae (strain 91E135)).